The primary structure comprises 331 residues: MKIIAYGIRDDEKPYLDEWVTKNHIEVKAVPDLLDSSNIDLAKDYDGVVAYQQKPYTADLFDKMHEFGIHAFSLRNVGLDNVPADALKKNDIKISNVPAYSPRAIAELSVTQLLALLRKIPEFEYKMAHGDYRWEPDIGLELNQMTVGVIGTGRIGRAAIDIFKPFGAKVIAYDVFRNPALEKEGMYVDTLEELYQQANVITLHVPALKDNYHMLDEKAFGQMQDGTFILNFARGTLVDTPALLKALDSGKVAGAALDTYENEVGIFDVDHGDQPIDDPVFNDLMSRRNVMITPHAAFYTRPAVKNMVQIALDNNRDLIEKNSSKNEVKFE.

Residues 154 to 155 (RI), Asp-174, 205 to 206 (VP), Asn-211, 232 to 234 (FAR), and Asp-258 contribute to the NAD(+) site. The active site involves Arg-234. Glu-263 is an active-site residue. Residue His-295 is the Proton donor of the active site.

Belongs to the D-isomer specific 2-hydroxyacid dehydrogenase family. Homodimer.

It carries out the reaction (R)-lactate + NAD(+) = pyruvate + NADH + H(+). It catalyses the reaction (R)-glycerate + NAD(+) = 3-hydroxypyruvate + NADH + H(+). Functionally, has both D-lactate and D-glycerate dehydrogenase activities. Equally active on pyruvate and hydroxypyruvate. In Pediococcus acidilactici, this protein is D-lactate/D-glycerate dehydrogenase.